Here is a 176-residue protein sequence, read N- to C-terminus: dCTP deaminase (176 aa).

Residues 99 to 104 and Asp-115 contribute to the dCTP site; that span reads RSTLAR. The active-site Proton donor/acceptor is Glu-125. DCTP is bound at residue Gln-163.

It belongs to the dCTP deaminase family. As to quaternary structure, homotrimer.

It catalyses the reaction dCTP + H2O + H(+) = dUTP + NH4(+). It participates in pyrimidine metabolism; dUMP biosynthesis; dUMP from dCTP (dUTP route): step 1/2. Its function is as follows. Catalyzes the deamination of dCTP to dUTP. In Pyrobaculum calidifontis (strain DSM 21063 / JCM 11548 / VA1), this protein is dCTP deaminase.